The chain runs to 267 residues: Translation initiation factor 2 subunit alpha (267 aa).

The 72-residue stretch at 12–83 (GEIVMATVER…KRKYANLSLR (72 aa)) folds into the S1 motif domain.

It belongs to the eIF-2-alpha family. As to quaternary structure, heterotrimer composed of an alpha, a beta and a gamma chain.

Functionally, eIF-2 functions in the early steps of protein synthesis by forming a ternary complex with GTP and initiator tRNA. The sequence is that of Translation initiation factor 2 subunit alpha from Methanopyrus kandleri (strain AV19 / DSM 6324 / JCM 9639 / NBRC 100938).